We begin with the raw amino-acid sequence, 166 residues long: Interferon gamma (166 aa).

An N-terminal signal peptide occupies residues 1 to 23 (MKYTSYFLALQLCLLLGFSGSYG). Glutamine 24 bears the Pyrrolidone carboxylic acid mark. 2 N-linked (GlcNAc...) asparagine glycosylation sites follow: asparagine 39 and asparagine 106.

The protein belongs to the type II (or gamma) interferon family. In terms of assembly, homodimer. Interacts with IFNGR1 (via extracellular domain); this interaction promotes IFNGR1 dimerization. In terms of tissue distribution, released primarily from activated T lymphocytes.

Its subcellular location is the secreted. Functionally, type II interferon produced by immune cells such as T-cells and NK cells that plays crucial roles in antimicrobial, antiviral, and antitumor responses by activating effector immune cells and enhancing antigen presentation. Primarily signals through the JAK-STAT pathway after interaction with its receptor IFNGR1 to affect gene regulation. Upon IFNG binding, IFNGR1 intracellular domain opens out to allow association of downstream signaling components JAK2, JAK1 and STAT1, leading to STAT1 activation, nuclear translocation and transcription of IFNG-regulated genes. Many of the induced genes are transcription factors such as IRF1 that are able to further drive regulation of a next wave of transcription. Plays a role in class I antigen presentation pathway by inducing a replacement of catalytic proteasome subunits with immunoproteasome subunits. In turn, increases the quantity, quality, and repertoire of peptides for class I MHC loading. Increases the efficiency of peptide generation also by inducing the expression of activator PA28 that associates with the proteasome and alters its proteolytic cleavage preference. Up-regulates as well MHC II complexes on the cell surface by promoting expression of several key molecules such as cathepsins B/CTSB, H/CTSH, and L/CTSL. Participates in the regulation of hematopoietic stem cells during development and under homeostatic conditions by affecting their development, quiescence, and differentiation. This chain is Interferon gamma (IFNG), found in Moschus berezovskii (Chinese forest musk deer).